A 200-amino-acid polypeptide reads, in one-letter code: CASP-like protein 1D2 (200 aa).

The interval 1–26 (MASTENPDPETGKSEPIPASATTPPP) is disordered. Residues 1 to 36 (MASTENPDPETGKSEPIPASATTPPPSAASFLDCRK) are Cytoplasmic-facing. A helical membrane pass occupies residues 37–57 (IDVIIRVLLFSATLTALIVMV). At 58-85 (TSDQTEKTQLPGVSSPAPVSAEFNDSPA) the chain is on the extracellular side. The chain crosses the membrane as a helical span at residues 86 to 106 (FIFFVVALVVTSFYALMSTLV). Residues 107–129 (SISLLLKPEFTARVSVYLASLDM) are Cytoplasmic-facing. Residues 130 to 150 (VMLGILASATGTAGGVAYIAL) traverse the membrane as a helical segment. The Extracellular segment spans residues 151 to 171 (KGNKEVGWNKICNVYDKFCRY). Residues 172–192 (IATSLALSLFATLLLLVLSIC) form a helical membrane-spanning segment. The Cytoplasmic portion of the chain corresponds to 193–200 (SALSKRTP).

Belongs to the Casparian strip membrane proteins (CASP) family. As to quaternary structure, homodimer and heterodimers.

The protein resides in the cell membrane. The protein is CASP-like protein 1D2 of Arabidopsis lyrata subsp. lyrata (Lyre-leaved rock-cress).